Reading from the N-terminus, the 61-residue chain is Small venom protein 1 (61 aa).

A signal peptide spans 1–20; the sequence is MRCVAIFLVVICAFVLQALA.

In terms of tissue distribution, expressed by the venom gland.

The protein resides in the secreted. This Pimpla hypochondriaca (Parasitoid wasp) protein is Small venom protein 1.